The chain runs to 493 residues: Cobyric acid synthase (493 aa).

Positions Pro252–Leu440 constitute a GATase cobBQ-type domain. The Nucleophile role is filled by Cys333. His432 is an active-site residue.

The protein belongs to the CobB/CobQ family. CobQ subfamily.

The protein operates within cofactor biosynthesis; adenosylcobalamin biosynthesis. Its function is as follows. Catalyzes amidations at positions B, D, E, and G on adenosylcobyrinic A,C-diamide. NH(2) groups are provided by glutamine, and one molecule of ATP is hydrogenolyzed for each amidation. The polypeptide is Cobyric acid synthase (Thermodesulfovibrio yellowstonii (strain ATCC 51303 / DSM 11347 / YP87)).